A 162-amino-acid chain; its full sequence is Nitric oxide synthase, inducible (162 aa).

Over residues Leu24–Pro37 the composition is skewed to polar residues. Residues Leu24–Val65 are disordered. Zn(2+) is bound by residues Cys90 and Cys95. Residue Ser98 participates in (6R)-L-erythro-5,6,7,8-tetrahydrobiopterin binding. Glu132 is an L-arginine binding site. His160 provides a ligand contact to FAD.

It belongs to the NOS family. As to quaternary structure, homodimer. Interacts with NHERF1. Interacts with GAPDH; induced by oxidatively-modified low-densitity lipoprotein (LDL(ox)). Interacts with S100A8 and S100A9 to form the iNOS-S100A8/9 transnitrosylase complex. Interacts with SPSB1, SPSB2 and SPSB4. Interacts with ELOC and CUL5 in the presence of SPSB1 or SPSB2 or SPSB4. Forms a complex with ASL, ASS1 and HSP90AA1; the complex regulates cell-autonomous L-arginine synthesis and citrulline recycling while channeling extracellular L-arginine to nitric oxide synthesis pathway. Heme b serves as cofactor. The cofactor is FAD. It depends on FMN as a cofactor. (6R)-L-erythro-5,6,7,8-tetrahydrobiopterin is required as a cofactor. In terms of processing, polyubiquitinated; mediated by SPSB1, SPSB2 and SPSB4, leading to proteasomal degradation.

The protein localises to the cytoplasm. It is found in the cytosol. The catalysed reaction is 2 L-arginine + 3 NADPH + 4 O2 + H(+) = 2 L-citrulline + 2 nitric oxide + 3 NADP(+) + 4 H2O. Its activity is regulated as follows. Regulated by calcium/calmodulin. Its function is as follows. Produces nitric oxide (NO) which is a messenger molecule with diverse functions throughout the body. In macrophages, NO mediates tumoricidal and bactericidal actions. Also has nitrosylase activity and mediates cysteine S-nitrosylation of cytoplasmic target proteins such PTGS2/COX2. As component of the iNOS-S100A8/9 transnitrosylase complex involved in the selective inflammatory stimulus-dependent S-nitrosylation of GAPDH implicated in regulation of the GAIT complex activity and probably multiple targets including ANXA5, EZR, MSN and VIM. Involved in inflammation, enhances the synthesis of pro-inflammatory mediators such as IL6 and IL8. The protein is Nitric oxide synthase, inducible (NOS2) of Macaca mulatta (Rhesus macaque).